Reading from the N-terminus, the 448-residue chain is Phosphoglucosamine mutase (448 aa).

The Phosphoserine intermediate role is filled by S101. Positions 101, 241, 243, and 245 each coordinate Mg(2+). S101 carries the post-translational modification Phosphoserine.

This sequence belongs to the phosphohexose mutase family. It depends on Mg(2+) as a cofactor. Post-translationally, activated by phosphorylation.

The enzyme catalyses alpha-D-glucosamine 1-phosphate = D-glucosamine 6-phosphate. In terms of biological role, catalyzes the conversion of glucosamine-6-phosphate to glucosamine-1-phosphate. The protein is Phosphoglucosamine mutase of Macrococcus caseolyticus (strain JCSC5402) (Macrococcoides caseolyticum).